The primary structure comprises 223 residues: Small ribosomal subunit protein uS3 (223 aa).

One can recognise a KH type-2 domain in the interval 39–117; it reads IREHLRKKPS…RPELNAKLVA (79 aa).

This sequence belongs to the universal ribosomal protein uS3 family. In terms of assembly, part of the 30S ribosomal subunit. Forms a tight complex with proteins S10 and S14.

Binds the lower part of the 30S subunit head. Binds mRNA in the 70S ribosome, positioning it for translation. The polypeptide is Small ribosomal subunit protein uS3 (Chlamydia caviae (strain ATCC VR-813 / DSM 19441 / 03DC25 / GPIC) (Chlamydophila caviae)).